The primary structure comprises 260 residues: Pyridoxine 5'-phosphate synthase (260 aa).

Asn-6 contacts 3-amino-2-oxopropyl phosphate. 8–9 (DH) lines the 1-deoxy-D-xylulose 5-phosphate pocket. Arg-17 lines the 3-amino-2-oxopropyl phosphate pocket. His-42 acts as the Proton acceptor in catalysis. Residues Arg-44 and His-49 each contribute to the 1-deoxy-D-xylulose 5-phosphate site. Glu-69 serves as the catalytic Proton acceptor. Thr-99 lines the 1-deoxy-D-xylulose 5-phosphate pocket. Catalysis depends on His-213, which acts as the Proton donor. Residues Gly-214 and 235–236 (GQ) each bind 3-amino-2-oxopropyl phosphate.

Belongs to the PNP synthase family. As to quaternary structure, homooctamer; tetramer of dimers.

The protein resides in the cytoplasm. It carries out the reaction 3-amino-2-oxopropyl phosphate + 1-deoxy-D-xylulose 5-phosphate = pyridoxine 5'-phosphate + phosphate + 2 H2O + H(+). It functions in the pathway cofactor biosynthesis; pyridoxine 5'-phosphate biosynthesis; pyridoxine 5'-phosphate from D-erythrose 4-phosphate: step 5/5. In terms of biological role, catalyzes the complicated ring closure reaction between the two acyclic compounds 1-deoxy-D-xylulose-5-phosphate (DXP) and 3-amino-2-oxopropyl phosphate (1-amino-acetone-3-phosphate or AAP) to form pyridoxine 5'-phosphate (PNP) and inorganic phosphate. This is Pyridoxine 5'-phosphate synthase from Sulfurimonas denitrificans (strain ATCC 33889 / DSM 1251) (Thiomicrospira denitrificans (strain ATCC 33889 / DSM 1251)).